The sequence spans 1938 residues: Myosin-1 (1938 aa).

Residues Asp-33–Pro-82 form the Myosin N-terminal SH3-like domain. A phosphothreonine mark is found at Thr-64 and Thr-69. Positions Asp-86–Asp-781 constitute a Myosin motor domain. Lys-130 is subject to N6,N6,N6-trimethyllysine. Gly-179–Thr-186 is a binding site for ATP. At Tyr-389 the chain carries Phosphotyrosine. At Thr-419 the chain carries Phosphothreonine. Tyr-424 is modified (phosphotyrosine). A Phosphoserine modification is found at Ser-625. An actin-binding region spans residues Leu-658 to Glu-680. The residue at position 756 (His-756) is a Pros-methylhistidine. The segment at Lys-760–Gly-774 is actin-binding. The IQ domain maps to Leu-784–Ser-813. The stretch at Leu-842–Glu-1938 forms a coiled coil. 2 positions are modified to phosphoserine: Ser-1091 and Ser-1095. Disordered stretches follow at residues Glu-1124–Leu-1146 and Arg-1152–Glu-1171. Basic and acidic residues predominate over residues Ala-1127 to Leu-1146. 2 positions are modified to phosphoserine: Ser-1161 and Ser-1236. Thr-1240 is modified (phosphothreonine). Phosphoserine occurs at positions 1242 and 1260. Thr-1264 and Thr-1285 each carry phosphothreonine. 4 positions are modified to phosphoserine: Ser-1287, Ser-1291, Ser-1302, and Ser-1305. At Tyr-1463 the chain carries Phosphotyrosine. Thr-1466 is modified (phosphothreonine). A Phosphoserine modification is found at Ser-1473. At Tyr-1491 the chain carries Phosphotyrosine. Ser-1494 carries the phosphoserine modification. Thr-1500 is modified (phosphothreonine). Ser-1513 is modified (phosphoserine). At Thr-1516 the chain carries Phosphothreonine. Residues Ser-1541, Ser-1553, Ser-1573, Ser-1599, Ser-1602, Ser-1713, and Ser-1725 each carry the phosphoserine modification. 2 positions are modified to phosphothreonine: Thr-1729 and Thr-1735.

The protein belongs to the TRAFAC class myosin-kinesin ATPase superfamily. Myosin family. As to quaternary structure, muscle myosin is a hexameric protein that consists of 2 heavy chain subunits (MHC), 2 alkali light chain subunits (MLC) and 2 regulatory light chain subunits (MLC-2). Interacts with SLC26A5.

It localises to the cytoplasm. The protein resides in the myofibril. Functionally, required for normal hearing. It plays a role in cochlear amplification of auditory stimuli, likely through the positive regulation of prestin (SLC26A5) activity and outer hair cell (OHC) electromotility. This is Myosin-1 (MYH1) from Bos taurus (Bovine).